The chain runs to 286 residues: MSGKEESSNYAATAEEEAVNQGFVLPEGKIMPNTVFVGGIDITMDEIEIRDFFTRFGNVKEVKIITDRTGVSKGYGFISFSDEVDIQKIVKSQISFHGKKLKLGPAIRKICTYVQPRPVVLSHPTPFHHAWNNQNADSYIQHSPIVSPITQYVQACPYPSSPPMAIQQIPVGCQQPGYFQVSPQWPADQRSYMFPTPAFTFNYHCCDMDPNGGEPIPREYPIDQTVSASGANPQKRYVEMSTQTIVSCLFDPANKFHSFVSQEDYLKDNRVHHLRRRESVIKRVSK.

The 82-residue stretch at Asn33–Val114 folds into the RRM domain. One can recognise a DAZ domain in the interval Ala155 to Gln180.

Belongs to the RRM DAZ family. Interacts with the C-terminus of pabp1 and with epabp. Prior to oocyte maturation, found in a complex with epabp and pum2 proteins and spdy1 mRNA; pum2 dissociates from the complex during maturation.

The protein localises to the cytoplasm. Its function is as follows. RNA-binding protein that is required for primordial germ cell (PGC) differentiation and indirectly necessary for the migration of PGCs through the endoderm. May promote meiotic cell division during spermatogenesis. Shows a preference for G- and U-rich RNAs and probably binds the 3'-UTR of target mRNAs. Stimulates the initiation of translation of mRNAs through the recruitment of poly(A)-binding proteins (PABPs). The chain is Deleted in azoospermia-like-B (dazl-b) from Xenopus laevis (African clawed frog).